The following is a 1515-amino-acid chain: DNA topoisomerase 2-binding protein 1 (1515 aa).

BRCT domains lie at 101-189 and 195-284; these read VYNM…KYTD and FKCP…IYKA. Residue threonine 298 is modified to Phosphothreonine. 3 BRCT domains span residues 353-443, 551-636, and 644-741; these read APED…SYIH, REEG…SNPL, and SGVT…HFLV. Residues 759–893 form an interaction with CIP2A region; the sequence is VSSNPDLPAH…TDSHSASPQL (135 aa). Residue threonine 782 is modified to Phosphothreonine. A disordered region spans residues 799 to 826; that stretch reads SQQRGQDPTFPPVRQPLTKEPSLHLDTP. Threonine 851 is modified (phosphothreonine). 5 positions are modified to phosphoserine: serine 862, serine 863, serine 866, serine 888, and serine 890. Polar residues predominate over residues 880–891; sequence SSRNTDSHSASP. The interval 880 to 901 is disordered; it reads SSRNTDSHSASPQLKGAHLEEE. The BRCT 6 domain maps to 902–993; that stretch reads ETRKPLDSVV…KHLPESLYPH (92 aa). The segment at 1020–1055 is disordered; the sequence is VSASKDDGPDHLSVEGNETNTMGTNDKESPLLNGSG. Residues 1023–1032 are compositionally biased toward basic and acidic residues; the sequence is SKDDGPDHLS. Residue threonine 1064 is modified to Phosphothreonine. Residues 1097–1116 show a composition bias toward low complexity; sequence SRSSCNSASSTPDSARSVRS. 3 disordered regions span residues 1097–1119, 1203–1255, and 1491–1515; these read SRSSCNSASSTPDSARSVRSGRS, VTQA…TQEE, and KKGGPGLPQKRKTPAENVVKRPRVH. Over residues 1217-1229 the composition is skewed to pro residues; it reads PPVAERPLIPEPQ. The region spanning 1255–1347 is the BRCT 7 domain; the sequence is ETHRKVKKQY…RFVQEEDYEW (93 aa). The Nuclear localization signal signature appears at 1510–1513; the sequence is KRPR.

This sequence belongs to the TOPBP1 family. As to quaternary structure, interacts (via BRCT domains 1 and 2) with (phosphorylated) MDC1; promoting TOPBP1 recruitment to DNA damage sites during mitosis. Interacts (via BRCT domains 7 and 8) with (autophosphorylated) ATR; promoting activation of ATR. Interacts (via BRCT domains 7 and 8) with (phosphorylated) POLQ; specifically binds POLQ phosphorylated by PLK1, promoting POLQ recruitment to DNA damage sites. Interacts (via BRCT domains 1 and 2) with (phosphorylated) RAD9A. Interacts (via BRCT domain 2) with (phosphorylated) TP53BP1. Interacts (via BRCT domain 2) with (phosphorylated) HTATSF1. Interacts (via BRCT domains 7 and 8) with (phosphorylated) RAD51; promoting RAD51 recruitment to damaged chromatin. Interacts with CIP2A; forming the CIP2A-TOPBP1 complex. Interacts with POLE. Interacts with UBR5. Interacts with E2F1. Interacts with PML. Interacts with SMARCA2. Interacts with SMARCA4. Interacts with RHNO1. May interact with TOP2B. Interacts with TICRR. Interacts with HELB. Phosphorylated on serine and threonine residues in response to X-ray irradiation. Post-translationally, ubiquitinated and degraded by the proteasome. X-ray irradiation reduces ubiquitination. Deubiquitinated by USP13; leading to TOPBP1 stabilizion and activation of the ATR-TOPBP1 axis pathway. Highly expressed in testis.

It localises to the nucleus. Its subcellular location is the chromosome. It is found in the cytoplasm. The protein resides in the cytoskeleton. The protein localises to the microtubule organizing center. It localises to the centrosome. Its subcellular location is the spindle pole. Scaffold protein that acts as a key protein-protein adapter in DNA replication and DNA repair. Composed of multiple BRCT domains, which specifically recognize and bind phosphorylated proteins, bringing proteins together into functional combinations. Required for DNA replication initiation but not for the formation of pre-replicative complexes or the elongation stages. Necessary for the loading of replication factors onto chromatin, including GMNC, CDC45, DNA polymerases and components of the GINS complex. Plays a central role in DNA repair by bridging proteins and promoting recruitment of proteins to DNA damage sites. Involved in double-strand break (DSB) repair via homologous recombination in S-phase by promoting the exchange between the DNA replication factor A (RPA) complex and RAD51. Mechanistically, TOPBP1 is recruited to DNA damage sites in S-phase via interaction with phosphorylated HTATSF1, and promotes the loading of RAD51, thereby facilitating RAD51 nucleofilaments formation and RPA displacement, followed by homologous recombination. Involved in microhomology-mediated end-joining (MMEJ) DNA repair by promoting recruitment of polymerase theta (POLQ) to DNA damage sites during mitosis. MMEJ is an alternative non-homologous end-joining (NHEJ) machinery that takes place during mitosis to repair DSBs in DNA that originate in S-phase. Recognizes and binds POLQ phosphorylated by PLK1, enabling its recruitment to DSBs for subsequent repair. Involved in G1 DNA damage checkpoint by acting as a molecular adapter that couples TP53BP1 and the 9-1-1 complex. In response to DNA damage, triggers the recruitment of checkpoint signaling proteins on chromatin, which activate the CHEK1 signaling pathway and block S-phase progression. Acts as an activator of the kinase activity of ATR. Also required for chromosomal stability when DSBs occur during mitosis by forming filamentous assemblies that bridge MDC1 and tether broken chromosomes during mitosis. Together with CIP2A, plays an essential role in the response to genome instability generated by the presence of acentric chromosome fragments derived from shattered chromosomes within micronuclei. Micronuclei, which are frequently found in cancer cells, consist of chromatin surrounded by their own nuclear membrane: following breakdown of the micronuclear envelope, a process associated with chromothripsis, the CIP2A-TOPBP1 complex tethers chromosome fragments during mitosis to ensure clustered segregation of the fragments to a single daughter cell nucleus, facilitating re-ligation with limited chromosome scattering and loss. Recruits the SWI/SNF chromatin remodeling complex to E2F1-responsive promoters, thereby down-regulating E2F1 activity and inhibiting E2F1-dependent apoptosis during G1/S transition and after DNA damage. The protein is DNA topoisomerase 2-binding protein 1 of Mus musculus (Mouse).